A 203-amino-acid polypeptide reads, in one-letter code: Small ribosomal subunit protein uS4 (203 aa).

The interval 15–46 (LGENIWGRPKSSVNRRSYGPGQHGQRRKSKVS) is disordered. The S4 RNA-binding domain maps to 94–154 (QRLDMVVYRA…KKAKEMALIA (61 aa)).

It belongs to the universal ribosomal protein uS4 family. In terms of assembly, part of the 30S ribosomal subunit. Contacts protein S5. The interaction surface between S4 and S5 is involved in control of translational fidelity.

In terms of biological role, one of the primary rRNA binding proteins, it binds directly to 16S rRNA where it nucleates assembly of the body of the 30S subunit. Functionally, with S5 and S12 plays an important role in translational accuracy. This is Small ribosomal subunit protein uS4 from Novosphingobium aromaticivorans (strain ATCC 700278 / DSM 12444 / CCUG 56034 / CIP 105152 / NBRC 16084 / F199).